The following is a 228-amino-acid chain: FAS1 domain-containing protein NCU02579 (228 aa).

Positions 1–18 (MRFTPYLVLAPTAAVAFA) are cleaved as a signal peptide. The segment at 50 to 74 (PAVGLGPAMPPSGAPQADGPANAGG) is disordered. The 149-residue stretch at 77 to 225 (SVMLSDVMGR…GEVWILKGVR (149 aa)) folds into the FAS1 domain.

The protein localises to the vacuole. The chain is FAS1 domain-containing protein NCU02579 from Neurospora crassa (strain ATCC 24698 / 74-OR23-1A / CBS 708.71 / DSM 1257 / FGSC 987).